The sequence spans 234 residues: Lipoprotein-releasing system ATP-binding protein LolD (234 aa).

Residues 7-234 (LLCNNLCKKY…QDELTVTGAL (228 aa)) enclose the ABC transporter domain. An ATP-binding site is contributed by 43-50 (GSSGSGKS).

This sequence belongs to the ABC transporter superfamily. Lipoprotein translocase (TC 3.A.1.125) family. As to quaternary structure, the complex is composed of two ATP-binding proteins (LolD) and two transmembrane proteins (LolC and LolE).

The protein resides in the cell inner membrane. Functionally, part of the ABC transporter complex LolCDE involved in the translocation of mature outer membrane-directed lipoproteins, from the inner membrane to the periplasmic chaperone, LolA. Responsible for the formation of the LolA-lipoprotein complex in an ATP-dependent manner. The chain is Lipoprotein-releasing system ATP-binding protein LolD from Photorhabdus laumondii subsp. laumondii (strain DSM 15139 / CIP 105565 / TT01) (Photorhabdus luminescens subsp. laumondii).